The following is a 107-amino-acid chain: MAAWSPAAAAPLLRGIRGLPLHHRMFATQTEGELRVTQILKEKFPRATAIKVTDISGGCGAMYEIKIESEEFKEKRTVQQHQMVNQALKEEIKEMHGLRIFTSVPKR.

Belongs to the BolA/IbaG family. In terms of assembly, interacts with NFU1. In terms of tissue distribution, widely expressed.

It is found in the mitochondrion. Its function is as follows. Acts as a mitochondrial iron-sulfur (Fe-S) cluster assembly factor that facilitates (Fe-S) cluster insertion into a subset of mitochondrial proteins. Probably acts together with NFU1. The polypeptide is BolA-like protein 3 (Homo sapiens (Human)).